A 389-amino-acid polypeptide reads, in one-letter code: MVSVSEIRKAQRAEGPATILAIGTANPANCVEQSTYPDFYFRITNSEHKTELKQKFQRMCDKSMINRRYMYLTEEILKENPSVCEYMAPSLDARQDMVVVEVPRLGKEAAVKAIKEWGQPKSKITHLIFCTTSGVDMPGADYQLTKLLGLRPYVKRYMMYQQGCFAGGTVLRLAKDLAENNKGARVLVVCSEVTAVTFRGPSDTHLDSLVGQALFGDGAAALIVGSDPLPEIENPIFEMVWTAQTIAPDSEGAIDGHLREAGLTFHLLKDVPAIVSKNIDKALVEAFQPLGISDYNSIFWIAHPGGPAILDQVEQKLALKPEKMKATREVLSEYGNMSSACVLFILDEMRRKSIQNGLKTTGEGLEWGVLFGFGPGLTIETVVLHSVAI.

Cys164 is an active-site residue.

The protein belongs to the thiolase-like superfamily. Chalcone/stilbene synthases family.

The enzyme catalyses (E)-4-coumaroyl-CoA + 3 malonyl-CoA + 3 H(+) = 2',4,4',6'-tetrahydroxychalcone + 3 CO2 + 4 CoA. The protein operates within secondary metabolite biosynthesis; flavonoid biosynthesis. Functionally, the primary product of this enzyme is 4,2',4',6'-tetrahydroxychalcone (also termed naringenin-chalcone or chalcone) which can under specific conditions spontaneously isomerize into naringenin. This Pisum sativum (Garden pea) protein is Chalcone synthase 3 (CHS3).